The chain runs to 254 residues: Receptor expression-enhancing protein 2 (254 aa).

2 helical membrane-spanning segments follow: residues 1-21 (MVSW…YPAY) and 35-55 (YVKW…ETLT). Serine 152 bears the Phosphoserine mark. The disordered stretch occupies residues 194-254 (LSLRSSTSQP…KKSSGGGDSA (61 aa)). The segment covering 205–219 (PRTETSEDDLGDKAP) has biased composition (basic and acidic residues).

Belongs to the DP1 family. As to quaternary structure, interacts with odorant receptor proteins.

The protein resides in the membrane. Functionally, required for endoplasmic reticulum (ER) network formation, shaping and remodeling. May enhance the cell surface expression of odorant receptors. The protein is Receptor expression-enhancing protein 2 (Reep2) of Mus musculus (Mouse).